The sequence spans 431 residues: Cleavage stimulation factor subunit 1 (431 aa).

6 WD repeats span residues 106 to 145 (SHKG…AKSA), 171 to 210 (DHVD…AKRA), 215 to 254 (QEAE…CFVS), 260 to 301 (QHTD…TTFE), 303 to 343 (AHDG…TLVR), and 395 to 431 (GHNN…STTD).

In terms of assembly, homodimer. The CSTF complex is composed of CSTF1 (50 kDa subunit), CSTF2 (64 kDa subunit) and CSTF3 (77 kDa subunit). Interacts (via repeats WD) directly with CSTF3. Interacts (via repeat WD6) with BARD1. Interacts with ERCC6.

It is found in the nucleus. Its function is as follows. One of the multiple factors required for polyadenylation and 3'-end cleavage of mammalian pre-mRNAs. May be responsible for the interaction of CSTF with other factors to form a stable complex on the pre-mRNA. This Mus musculus (Mouse) protein is Cleavage stimulation factor subunit 1 (Cstf1).